The chain runs to 211 residues: Octanoyltransferase (211 aa).

The region spanning 32-211 (DHEPEIIYLV…IQTEFNKIFK (180 aa)) is the BPL/LPL catalytic domain. Substrate contacts are provided by residues 71 to 78 (RGGKFTFH), 145 to 147 (AIG), and 158 to 160 (GVA). Cys-176 serves as the catalytic Acyl-thioester intermediate.

Belongs to the LipB family.

Its subcellular location is the cytoplasm. The catalysed reaction is octanoyl-[ACP] + L-lysyl-[protein] = N(6)-octanoyl-L-lysyl-[protein] + holo-[ACP] + H(+). It participates in protein modification; protein lipoylation via endogenous pathway; protein N(6)-(lipoyl)lysine from octanoyl-[acyl-carrier-protein]: step 1/2. In terms of biological role, catalyzes the transfer of endogenously produced octanoic acid from octanoyl-acyl-carrier-protein onto the lipoyl domains of lipoate-dependent enzymes. Lipoyl-ACP can also act as a substrate although octanoyl-ACP is likely to be the physiological substrate. This chain is Octanoyltransferase, found in Rickettsia massiliae (strain Mtu5).